A 212-amino-acid polypeptide reads, in one-letter code: External core antigen (212 aa).

Residues 1–19 (MQLFHLCLIISCSCPTVQA) form the signal peptide. Residues 25–27 (GWL) form an HBEAG region. The disordered stretch occupies residues 165 to 212 (NAPILSTLPETTVVRRRGRSPRRRTPSPRRRRSQSPRRRRSQSRESQC). Residues 178–205 (VRRRGRSPRRRTPSPRRRRSQSPRRRRS) are compositionally biased toward basic residues. A 1; half-length repeat occupies 184–190 (SPRRRTP). The interval 184–206 (SPRRRTPSPRRRRSQSPRRRRSQ) is 3 X 8 AA repeats of S-P-R-R-R-R-S-Q. The propeptide occupies 184–212 (SPRRRTPSPRRRRSQSPRRRRSQSRESQC). 2 tandem repeats follow at residues 191-198 (SPRRRRSQ) and 199-206 (SPRRRRSQ).

The protein belongs to the orthohepadnavirus precore antigen family. As to quaternary structure, homodimerizes. Phosphorylated. In terms of processing, cleaved by host furin.

It localises to the secreted. The protein localises to the host nucleus. Its function is as follows. May regulate immune response to the intracellular capsid in acting as a T-cell tolerogen, by having an immunoregulatory effect which prevents destruction of infected cells by cytotoxic T-cells. This immune regulation may predispose to chronicity during perinatal infections and prevent severe liver injury during adult infections. This Hepatitis B virus genotype C subtype ayw (isolate China/Tibet127/2002) (HBV-C) protein is External core antigen.